The primary structure comprises 529 residues: Bifunctional purine biosynthesis protein PurH (529 aa).

In terms of domain architecture, MGS-like spans 2–148; that stretch reads QQLRPIHRAL…KNHKDVAIVV (147 aa).

The protein belongs to the PurH family.

The catalysed reaction is (6R)-10-formyltetrahydrofolate + 5-amino-1-(5-phospho-beta-D-ribosyl)imidazole-4-carboxamide = 5-formamido-1-(5-phospho-D-ribosyl)imidazole-4-carboxamide + (6S)-5,6,7,8-tetrahydrofolate. It catalyses the reaction IMP + H2O = 5-formamido-1-(5-phospho-D-ribosyl)imidazole-4-carboxamide. It participates in purine metabolism; IMP biosynthesis via de novo pathway; 5-formamido-1-(5-phospho-D-ribosyl)imidazole-4-carboxamide from 5-amino-1-(5-phospho-D-ribosyl)imidazole-4-carboxamide (10-formyl THF route): step 1/1. The protein operates within purine metabolism; IMP biosynthesis via de novo pathway; IMP from 5-formamido-1-(5-phospho-D-ribosyl)imidazole-4-carboxamide: step 1/1. The sequence is that of Bifunctional purine biosynthesis protein PurH from Photorhabdus laumondii subsp. laumondii (strain DSM 15139 / CIP 105565 / TT01) (Photorhabdus luminescens subsp. laumondii).